An 82-amino-acid polypeptide reads, in one-letter code: Small ribosomal subunit protein bS16 (82 aa).

This sequence belongs to the bacterial ribosomal protein bS16 family.

The polypeptide is Small ribosomal subunit protein bS16 (Vibrio parahaemolyticus serotype O3:K6 (strain RIMD 2210633)).